A 152-amino-acid polypeptide reads, in one-letter code: FAD synthase (152 aa).

ATP-binding positions include 16-17, 21-24, aspartate 101, and tyrosine 129; these read TF and HPGH.

The protein belongs to the archaeal FAD synthase family. Homodimer. A divalent metal cation is required as a cofactor.

The enzyme catalyses FMN + ATP + H(+) = FAD + diphosphate. It functions in the pathway cofactor biosynthesis; FAD biosynthesis; FAD from FMN: step 1/1. Its function is as follows. Catalyzes the transfer of the AMP portion of ATP to flavin mononucleotide (FMN) to produce flavin adenine dinucleotide (FAD) coenzyme. The protein is FAD synthase of Methanocaldococcus vulcanius (strain ATCC 700851 / DSM 12094 / M7) (Methanococcus vulcanius).